The chain runs to 310 residues: L-lactate dehydrogenase (310 aa).

NAD(+)-binding positions include V11, D32, Y62, and 76–77; that span reads GV. Residues Q79, R85, and 117 to 120 contribute to the substrate site; that span reads NPVD. NAD(+) contacts are provided by residues 115–117 and S140; that span reads ASN. Substrate is bound at residue 145–148; sequence DTAR. Residues R150 and H165 each coordinate beta-D-fructose 1,6-bisphosphate. H172 acts as the Proton acceptor in catalysis. T227 contributes to the substrate binding site.

Belongs to the LDH/MDH superfamily. LDH family. In terms of assembly, homotetramer.

The protein localises to the cytoplasm. It catalyses the reaction (S)-lactate + NAD(+) = pyruvate + NADH + H(+). It functions in the pathway fermentation; pyruvate fermentation to lactate; (S)-lactate from pyruvate: step 1/1. Allosterically activated by fructose 1,6-bisphosphate (FBP). Catalyzes the conversion of lactate to pyruvate. The chain is L-lactate dehydrogenase from Allorhizobium ampelinum (strain ATCC BAA-846 / DSM 112012 / S4) (Agrobacterium vitis (strain S4)).